Reading from the N-terminus, the 244-residue chain is MAPNHGALLYEGKAKRVYYTDNSDEFLVHFKNDATAFNAKKHAQLEGKGSLNCEISTEIFKLLERNGIATHFLNLEDDCWMLVQRVDVIPIEIVIRNIASGSLCKQTPIAPGTELSRPLMDLYLKDDVLEDPLLTEERIDLLNLLSSSQRKEIQRLSLRVNDCLKEFMKGLDLLLVDFKLEMGFNGSGQLLIADEISPDSCRIWDLKTNDQDDRILDKDRFRKDLGGVLEGYSEILRRIKAFNS.

It belongs to the SAICAR synthetase family.

The catalysed reaction is 5-amino-1-(5-phospho-D-ribosyl)imidazole-4-carboxylate + L-aspartate + ATP = (2S)-2-[5-amino-1-(5-phospho-beta-D-ribosyl)imidazole-4-carboxamido]succinate + ADP + phosphate + 2 H(+). Its pathway is purine metabolism; IMP biosynthesis via de novo pathway; 5-amino-1-(5-phospho-D-ribosyl)imidazole-4-carboxamide from 5-amino-1-(5-phospho-D-ribosyl)imidazole-4-carboxylate: step 1/2. The sequence is that of Phosphoribosylaminoimidazole-succinocarboxamide synthase from Prochlorococcus marinus (strain SARG / CCMP1375 / SS120).